A 614-amino-acid polypeptide reads, in one-letter code: Ankyrin repeat domain-containing protein 55 (614 aa).

Residues 1–20 (MMRQATMDFSTPSVFDQQRG) form a disordered region. The span at 7–16 (MDFSTPSVFD) shows a compositional bias: polar residues. ANK repeat units follow at residues 26-55 (VDLTMVYQAASNGDVNALTAVIREDPSILE), 60-89 (EGCTPLMHAVSGRQADTVKLLLKMGANINM), 93-125 (YGRTSLCLATYLGWLEGCVSLLRNGAKHNIPDK), 126-157 (NGRLPLHAATAEPDMRLLTVLLQQSNISEINH), 161-190 (EGMTPLHWAAFHNQPQHTQMLLKKGADPTL), 194-223 (DFKTALHWAVQSGNRILCSIILSHHQGPSI), 230-260 (SGKTCVHIAAAAGFSDIIHELARVPECNLQA), 264-293 (DDRTPLHWAAAAGKAECVQSLLELGMDSNL), and 297-326 (NESTPLAYALYCGHTACVKLLSQESRTEPT). 4 disordered regions span residues 319–339 (QESRTEPTRPPPSQSSRPQKK), 354–375 (KKEEQRAHQKDPSRDRYREEDT), 454–476 (TSHAGLSSAPHHMAQRSQKSRSE), and 564–614 (RNNL…SDEN). Residues 354 to 373 (KKEEQRAHQKDPSRDRYREE) are compositionally biased toward basic and acidic residues. Position 475 is a phosphoserine (S475).

The sequence is that of Ankyrin repeat domain-containing protein 55 (ANKRD55) from Homo sapiens (Human).